The primary structure comprises 307 residues: tRNA pseudouridine synthase B (307 aa).

The active-site Nucleophile is the Asp-38.

This sequence belongs to the pseudouridine synthase TruB family. Type 1 subfamily.

The enzyme catalyses uridine(55) in tRNA = pseudouridine(55) in tRNA. In terms of biological role, responsible for synthesis of pseudouridine from uracil-55 in the psi GC loop of transfer RNAs. This Bacillus cereus (strain ZK / E33L) protein is tRNA pseudouridine synthase B.